A 183-amino-acid polypeptide reads, in one-letter code: Cell division protein ZapC (183 aa).

Belongs to the ZapC family. As to quaternary structure, interacts directly with FtsZ.

It localises to the cytoplasm. In terms of biological role, contributes to the efficiency of the cell division process by stabilizing the polymeric form of the cell division protein FtsZ. Acts by promoting interactions between FtsZ protofilaments and suppressing the GTPase activity of FtsZ. This chain is Cell division protein ZapC, found in Xenorhabdus bovienii (strain SS-2004) (Xenorhabdus nematophila subsp. bovienii).